The sequence spans 85 residues: Omega-conotoxin-like Am6.5 (85 aa).

An N-terminal signal peptide occupies residues 1-19 (MCILIVAVLFLTAWTFVMA). The propeptide occupies 20 to 53 (DDPRDEPDTVVRGGKLFSRARDEMNPAASKLNER). Cystine bridges form between C55/C73, C62/C77, and C72/C81. The residue at position 84 (Q84) is a Glutamine amide.

Belongs to the conotoxin O1 family. Is not hydroxylated. In terms of tissue distribution, expressed by the venom duct.

The protein localises to the secreted. Its function is as follows. Omega-conotoxins act at presynaptic membranes, they bind and block voltage-gated calcium channels (Cav). The polypeptide is Omega-conotoxin-like Am6.5 (Conus amadis (Amadis cone)).